Reading from the N-terminus, the 195-residue chain is ATP-dependent Clp protease proteolytic subunit (195 aa).

The Nucleophile role is filled by Ser101. His126 is a catalytic residue.

It belongs to the peptidase S14 family.

The protein localises to the plastid. The protein resides in the chloroplast stroma. The catalysed reaction is Hydrolysis of proteins to small peptides in the presence of ATP and magnesium. alpha-casein is the usual test substrate. In the absence of ATP, only oligopeptides shorter than five residues are hydrolyzed (such as succinyl-Leu-Tyr-|-NHMec, and Leu-Tyr-Leu-|-Tyr-Trp, in which cleavage of the -Tyr-|-Leu- and -Tyr-|-Trp bonds also occurs).. Cleaves peptides in various proteins in a process that requires ATP hydrolysis. Has a chymotrypsin-like activity. Plays a major role in the degradation of misfolded proteins. In Bigelowiella natans (Pedinomonas minutissima), this protein is ATP-dependent Clp protease proteolytic subunit.